The chain runs to 333 residues: MKIAVSGAGSWGTTLAVLLANKGHEVLLWAHRPEFAAALESDRENIRYLKGVRFPENLHVVSSLRDAVISSEMVVTAVPSQALRETVAMFSDCSLDGKIIVNVSKGIELKSGKRMSEVLLEVLPTLHASQVATLSGPSHAEEVSKGQPTTVVASSVSMGTAEIVQEAFHTGMFRVYVNTDIIGVELAGAVKNIIAIAAGITEGVGFGDNAKAAIITRGLAEMSRLCIRLGADPHTVSGLSGIGDLVVTCLSRHSRNRYVGEQIGAGRSLDDIVSQMNMVAEGVLTSKAVFELSRSVGVEMPITQAVYEMLFEHKPVQEAILDLMNREPKKEHY.

The NADPH site is built by S10, W11, H31, R32, and K105. Residues K105, G136, and S138 each contribute to the sn-glycerol 3-phosphate site. Position 140 (A140) interacts with NADPH. Residues K191, D244, S254, R255, and N256 each contribute to the sn-glycerol 3-phosphate site. K191 functions as the Proton acceptor in the catalytic mechanism. Position 255 (R255) interacts with NADPH. V279 and E281 together coordinate NADPH.

It belongs to the NAD-dependent glycerol-3-phosphate dehydrogenase family.

It is found in the cytoplasm. The enzyme catalyses sn-glycerol 3-phosphate + NAD(+) = dihydroxyacetone phosphate + NADH + H(+). It catalyses the reaction sn-glycerol 3-phosphate + NADP(+) = dihydroxyacetone phosphate + NADPH + H(+). The protein operates within membrane lipid metabolism; glycerophospholipid metabolism. In terms of biological role, catalyzes the reduction of the glycolytic intermediate dihydroxyacetone phosphate (DHAP) to sn-glycerol 3-phosphate (G3P), the key precursor for phospholipid synthesis. The sequence is that of Glycerol-3-phosphate dehydrogenase [NAD(P)+] from Chlorobium phaeobacteroides (strain DSM 266 / SMG 266 / 2430).